A 415-amino-acid chain; its full sequence is uncharacterized protein (415 aa).

[4Fe-4S] cluster contacts are provided by Cys66, Cys72, Cys75, and Cys149. S-adenosyl-L-methionine-binding residues include Gln249, Phe276, Glu296, and Asp344. Cys370 acts as the Nucleophile in catalysis.

This sequence belongs to the class I-like SAM-binding methyltransferase superfamily. RNA M5U methyltransferase family.

This is an uncharacterized protein from Brucella melitensis biotype 1 (strain ATCC 23456 / CCUG 17765 / NCTC 10094 / 16M).